Reading from the N-terminus, the 601-residue chain is NADH-ubiquinone oxidoreductase chain 5 (601 aa).

The next 17 helical transmembrane spans lie at 5 to 25 (ITSL…TLSF), 37 to 54 (YMRN…IYID), 83 to 105 (YCLT…SLWY), 112 to 129 (TLFF…LFFL), 134 to 156 (LLQL…NWWH), 169 to 189 (IIYN…SALF), 209 to 231 (WLPL…LHPW), 240 to 260 (TPVS…FLLI), 271 to 291 (MIIS…ALCA), 300 to 320 (IIAF…GINQ), 323 to 343 (LAFL…LCSA), 363 to 383 (LILP…MGMP), 400 to 420 (MSYV…LTSI), 451 to 471 (PLIR…TFFL), 478 to 498 (FSIP…VSSL), 508 to 528 (FSHM…AIFH), and 581 to 601 (NYIT…ALYF).

The protein belongs to the complex I subunit 5 family.

The protein resides in the mitochondrion inner membrane. The catalysed reaction is a ubiquinone + NADH + 5 H(+)(in) = a ubiquinol + NAD(+) + 4 H(+)(out). Its function is as follows. Core subunit of the mitochondrial membrane respiratory chain NADH dehydrogenase (Complex I) that is believed to belong to the minimal assembly required for catalysis. Complex I functions in the transfer of electrons from NADH to the respiratory chain. The immediate electron acceptor for the enzyme is believed to be ubiquinone. The sequence is that of NADH-ubiquinone oxidoreductase chain 5 (MT-ND5) from Myxine glutinosa (Atlantic hagfish).